The following is a 266-amino-acid chain: ATP synthase subunit a (266 aa).

6 consecutive transmembrane segments (helical) span residues 38–58, 99–119, 126–146, 162–182, 191–211, and 224–244; these read KQMLLVILSVVIIATFFILAA, LLFSLFFFILVNNIYGAIPVI, HVGGAYVMAGIVYFTWIIIGI, GVPWYILPIVVPIEIISNFLV, LFATMLAGHLIVMLAGSGIEF, and SVLVLVGAVAMYMLEALIMAL.

Belongs to the ATPase A chain family. As to quaternary structure, F-type ATPases have 2 components, CF(1) - the catalytic core - and CF(0) - the membrane proton channel. CF(1) has five subunits: alpha(3), beta(3), gamma(1), delta(1), epsilon(1). CF(0) has three main subunits: a(1), b(2) and c(9-12). The alpha and beta chains form an alternating ring which encloses part of the gamma chain. CF(1) is attached to CF(0) by a central stalk formed by the gamma and epsilon chains, while a peripheral stalk is formed by the delta and b chains.

It localises to the cell membrane. Functionally, key component of the proton channel; it plays a direct role in the translocation of protons across the membrane. In Paenarthrobacter aurescens (strain TC1), this protein is ATP synthase subunit a.